We begin with the raw amino-acid sequence, 328 residues long: D-cysteine desulfhydrase (328 aa).

An N6-(pyridoxal phosphate)lysine modification is found at Lys51.

The protein belongs to the ACC deaminase/D-cysteine desulfhydrase family. Homodimer. It depends on pyridoxal 5'-phosphate as a cofactor.

The enzyme catalyses D-cysteine + H2O = hydrogen sulfide + pyruvate + NH4(+) + H(+). In terms of biological role, catalyzes the alpha,beta-elimination reaction of D-cysteine and of several D-cysteine derivatives. It could be a defense mechanism against D-cysteine. This is D-cysteine desulfhydrase from Salmonella paratyphi C (strain RKS4594).